An 80-amino-acid polypeptide reads, in one-letter code: Defensin-like protein 1 (80 aa).

Residues M1 to A29 form the signal peptide. Q30 is modified (pyrrolidone carboxylic acid). 4 cysteine pairs are disulfide-bonded: C33–C80, C44–C65, C50–C74, and C54–C76.

The protein belongs to the DEFL family. Forms oligomers in its native state.

It localises to the secreted. Its function is as follows. Possesses antifungal activity sensitive to inorganic cations. In Raphanus sativus (Radish), this protein is Defensin-like protein 1 (AFP1).